The chain runs to 471 residues: Ribulose bisphosphate carboxylase large chain 2 (471 aa).

Substrate-binding residues include Asn116 and Thr166. Lys168 serves as the catalytic Proton acceptor. Lys170 serves as a coordination point for substrate. Mg(2+)-binding residues include Lys194, Asp196, and Glu197. An N6-carboxylysine modification is found at Lys194. Catalysis depends on His287, which acts as the Proton acceptor. 3 residues coordinate substrate: Arg288, His320, and Ser372.

It belongs to the RuBisCO large chain family. Type I subfamily. As to quaternary structure, heterohexadecamer of 8 large chains and 8 small chains. Forms a CsoS2-CsoS1-RuBisCO complex. It depends on Mg(2+) as a cofactor.

The protein localises to the carboxysome. The catalysed reaction is 2 (2R)-3-phosphoglycerate + 2 H(+) = D-ribulose 1,5-bisphosphate + CO2 + H2O. It carries out the reaction D-ribulose 1,5-bisphosphate + O2 = 2-phosphoglycolate + (2R)-3-phosphoglycerate + 2 H(+). RuBisCO catalyzes two reactions: the carboxylation of D-ribulose 1,5-bisphosphate, the primary event in carbon dioxide fixation, as well as the oxidative fragmentation of the pentose substrate. Both reactions occur simultaneously and in competition at the same active site. Replacing the endogenous type I ccbLS genes in H.neapolitanus with this carboxysomally targeted enzyme reconstitutes RuBisCO with about 25% of normal activity; the active enzyme is targeted to carboxysomes. This chain is Ribulose bisphosphate carboxylase large chain 2, found in Hydrogenovibrio crunogenus (strain DSM 25203 / XCL-2) (Thiomicrospira crunogena).